The sequence spans 148 residues: Small ribosomal subunit protein uS15 (148 aa).

Belongs to the universal ribosomal protein uS15 family.

This chain is Small ribosomal subunit protein uS15 (RPS13), found in Encephalitozoon cuniculi (strain GB-M1) (Microsporidian parasite).